Here is a 152-residue protein sequence, read N- to C-terminus: Large ribosomal subunit protein uL15 (152 aa).

Residues 31 to 58 (GASCGFGMRGQKSRSGRPTRPGFEGGQM) form a disordered region.

Belongs to the universal ribosomal protein uL15 family. In terms of assembly, part of the 50S ribosomal subunit.

In terms of biological role, binds to the 23S rRNA. The sequence is that of Large ribosomal subunit protein uL15 from Parasynechococcus marenigrum (strain WH8102).